The sequence spans 239 residues: Probable transcriptional regulatory protein YeeI (239 aa).

This sequence belongs to the TACO1 family. YeeN subfamily.

The protein resides in the cytoplasm. The chain is Probable transcriptional regulatory protein YeeI (yeeI) from Bacillus subtilis (strain 168).